Here is an 814-residue protein sequence, read N- to C-terminus: Cadherin-15 (814 aa).

A signal peptide spans 1–21; sequence MDAAFLLVLGLLAQSLCLSLG. A propeptide spanning residues 22-60 is cleaved from the precursor; sequence VPGWRRPTTLYPWRRAPALSRVRRAWVIPPISVSENHKR. Cadherin domains lie at 61–152, 153–260, 261–375, 376–481, and 482–590; these read LPYP…RPAF, LQEA…APEF, TRDE…PPVF, QENP…DHAP, and VLAP…VCLP. Residues 61–606 lie on the Extracellular side of the membrane; the sequence is LPYPLVQIKS…AGGTGLSLGA (546 aa). N227 carries N-linked (GlcNAc...) asparagine glycosylation. N531, N538, and N576 each carry an N-linked (GlcNAc...) asparagine glycan. The chain crosses the membrane as a helical span at residues 607 to 626; the sequence is LVIVLASALLLLVLVLLVAL. At 627–814 the chain is on the cytoplasmic side; it reads RARFWKQSRG…LLPRHRGRTA (188 aa). 2 disordered regions span residues 636–663 and 676–703; these read GKGLLHGPQDDLRDNVLNYDEQGGGEED and TALSLPLGPPPLRRDAPQGRLHPQPPRV.

Expressed in the brain and cerebellum.

It is found in the cell membrane. Cadherins are calcium-dependent cell adhesion proteins. They preferentially interact with themselves in a homophilic manner in connecting cells; cadherins may thus contribute to the sorting of heterogeneous cell types. M-cadherin is part of the myogenic program and may provide a trigger for terminal muscle differentiation. The sequence is that of Cadherin-15 (CDH15) from Homo sapiens (Human).